Consider the following 397-residue polypeptide: Acylalkylpyrone synthase csyB (397 aa).

CoA-binding positions include Lys-50 and 50 to 57 (KMLEINRK). Cys-155 serves as the catalytic Nucleophile. Position 214-215 (214-215 (GD)) interacts with substrate. CoA contacts are provided by residues Ile-267, Gly-312, 312–315 (GGYA), Tyr-314, and Ala-315. Residue His-377 is part of the active site.

Belongs to the thiolase-like superfamily. Chalcone/stilbene synthases family. In terms of assembly, homodimer.

Its function is as follows. Acylalkylpyrone synthase that catalyzes not only the polyketide chain elongation but also the one-pot condensation of two beta-ketoacyl units to produce the 3-acyl-4-hydroxy-6-alkyl-alpha-pyrone (AcAP) scaffold, a precursor of csypyrone B. The enzyme reaction is initiated by the loading of acetoacetyl-CoA onto Cys-155, and subsequent thioester bond cleavage by the nucleophilic water generates the beta-keto acid intermediate, which is placed within a pocket. The second beta-ketoacyl unit is then produced by polyketide chain elongation of fatty acyl-CoA with one molecule of malonyl-CoA, and the condensation with the beta-ketoacid generates the final products. Csypyrone B1 is the major product and contains a propanoic acid side-chain, whereas csypyrones B2 and B3 are minor compounds that contain butyric or pentanoic acid side-chains, respectively. The sequence is that of Acylalkylpyrone synthase csyB from Aspergillus oryzae (strain ATCC 42149 / RIB 40) (Yellow koji mold).